We begin with the raw amino-acid sequence, 396 residues long: Activity-regulated cytoskeleton-associated protein (396 aa).

Residues 54–78 adopt a coiled-coil conformation; sequence SKQVERELKGLHRSVGKLENNLDGY. The interval 89–100 is interaction with SH3GL1 or SH3GL3; that stretch reads KSIKACLCRCQE. The interaction with DNM2 stretch occupies residues 195-214; the sequence is QSWVPGEDGQPSPGVDTQIF. Serine 260 is subject to Phosphoserine. Residues lysine 268 and lysine 269 each participate in a glycyl lysine isopeptide (Lys-Gly) (interchain with G-Cter in ubiquitin) cross-link. Threonine 278 carries the post-translational modification Phosphothreonine. Positions 358 to 396 are disordered; that stretch reads GLEQAAEPSVTPLPTEDETEALTPALTSESVASDRTQPE. Positions 382-396 are enriched in polar residues; the sequence is ALTSESVASDRTQPE.

Belongs to the ARC/ARG3.1 family. Homooligomer; homooligomerizes into virion-like capsids. Interacts with SH3GL1/endophilin-2, SH3GL3/endophilin-3 and DNM2/DYN2. Interacts with CAMK2B (in the kinase inactive state); leading to target ARC to inactive synapses. Interacts with PSEN1. Interacts with GRIN2A and GRIN2B; inhibiting homooligomerization. Post-translationally, palmitoylation anchors the protein into the membrane by allowing direct insertion into the hydrophobic core of the lipid bilayer. In terms of processing, ubiquitinated by UBE3A, leading to its degradation by the proteasome, thereby promoting AMPA receptors (AMPARs) expression at synapses. Ubiquitinated by RNF216 at Lys-268 and Lys-269 limiting ARC protein levels induced by synaptic activity and thus regulating ARC-dependent forms of synaptic plasticity. Phosphorylation at Ser-260 by CaMK2 prevents homooligomerization into virion-like capsids by disrupting an interaction surface essential for high-order oligomerization. Phosphorylation by CaMK2 inhibits synaptic activity. In terms of tissue distribution, expressed exclusively in certain parts of the brain including cortex and molecular layer of the hippocampus. Typically expressed at high level in a minority of neurons. Basal expression higher in cortex than in hippocampus, highest in visual cortex.

It localises to the extracellular vesicle membrane. The protein resides in the postsynaptic cell membrane. Its subcellular location is the synapse. The protein localises to the postsynaptic density. It is found in the early endosome membrane. It localises to the cell projection. The protein resides in the dendrite. Its subcellular location is the cytoplasm. The protein localises to the cytoskeleton. It is found in the cell cortex. It localises to the dendritic spine. The protein resides in the cytoplasmic vesicle. Its subcellular location is the secretory vesicle. The protein localises to the acrosome. It is found in the clathrin-coated vesicle membrane. Master regulator of synaptic plasticity that self-assembles into virion-like capsids that encapsulate RNAs and mediate intercellular RNA transfer in the nervous system. ARC protein is released from neurons in extracellular vesicles that mediate the transfer of ARC mRNA into new target cells, where ARC mRNA can undergo activity-dependent translation. ARC capsids are endocytosed and are able to transfer ARC mRNA into the cytoplasm of neurons. Acts as a key regulator of synaptic plasticity: required for protein synthesis-dependent forms of long-term potentiation (LTP) and depression (LTD) and for the formation of long-term memory. Regulates synaptic plasticity by promoting endocytosis of AMPA receptors (AMPARs) in response to synaptic activity: this endocytic pathway maintains levels of surface AMPARs in response to chronic changes in neuronal activity through synaptic scaling, thereby contributing to neuronal homeostasis. Acts as a postsynaptic mediator of activity-dependent synapse elimination in the developing cerebellum by mediating elimination of surplus climbing fiber synapses. Accumulates at weaker synapses, probably to prevent their undesired enhancement. This suggests that ARC-containing virion-like capsids may be required to eliminate synaptic material. Required to transduce experience into long-lasting changes in visual cortex plasticity and for long-term memory. Involved in postsynaptic trafficking and processing of amyloid-beta A4 (APP) via interaction with PSEN1. In addition to its role in synapses, also involved in the regulation of the immune system: specifically expressed in skin-migratory dendritic cells and regulates fast dendritic cell migration, thereby regulating T-cell activation. This is Activity-regulated cytoskeleton-associated protein from Rattus norvegicus (Rat).